The sequence spans 163 residues: Cyanate hydratase (163 aa).

Catalysis depends on residues Arg103, Glu106, and Ser129.

The protein belongs to the cyanase family.

It carries out the reaction cyanate + hydrogencarbonate + 3 H(+) = NH4(+) + 2 CO2. Catalyzes the reaction of cyanate with bicarbonate to produce ammonia and carbon dioxide. This chain is Cyanate hydratase, found in Paracoccidioides lutzii (strain ATCC MYA-826 / Pb01) (Paracoccidioides brasiliensis).